The sequence spans 199 residues: Recombination protein RecR (199 aa).

The C4-type zinc finger occupies 57–72 (CSSCRTFTEESLCPIC). Residues 81–176 (DLICVVETPA…NVSRIAHGVP (96 aa)) form the Toprim domain.

This sequence belongs to the RecR family.

In terms of biological role, may play a role in DNA repair. It seems to be involved in an RecBC-independent recombinational process of DNA repair. It may act with RecF and RecO. This Shewanella loihica (strain ATCC BAA-1088 / PV-4) protein is Recombination protein RecR.